The chain runs to 193 residues: Acyl carrier protein phosphodiesterase (193 aa).

Belongs to the AcpH family.

The enzyme catalyses holo-[ACP] + H2O = apo-[ACP] + (R)-4'-phosphopantetheine + H(+). Converts holo-ACP to apo-ACP by hydrolytic cleavage of the phosphopantetheine prosthetic group from ACP. This is Acyl carrier protein phosphodiesterase from Salmonella agona (strain SL483).